Reading from the N-terminus, the 206-residue chain is Ribosomal RNA small subunit methyltransferase G (206 aa).

S-adenosyl-L-methionine-binding positions include glycine 73, leucine 78, 124-125, and arginine 139; that span reads VE.

It belongs to the methyltransferase superfamily. RNA methyltransferase RsmG family.

The protein localises to the cytoplasm. The catalysed reaction is guanosine(527) in 16S rRNA + S-adenosyl-L-methionine = N(7)-methylguanosine(527) in 16S rRNA + S-adenosyl-L-homocysteine. Functionally, specifically methylates the N7 position of guanine in position 527 of 16S rRNA. The protein is Ribosomal RNA small subunit methyltransferase G of Pectobacterium atrosepticum (strain SCRI 1043 / ATCC BAA-672) (Erwinia carotovora subsp. atroseptica).